The primary structure comprises 866 residues: Sphingomyelin phosphodiesterase 4 (866 aa).

Phosphoserine is present on residues S169 and S285. The residue at position 708 (T708) is a Phosphothreonine. Residue S792 is modified to Phosphoserine. A helical membrane pass occupies residues 822–842; sequence LLLAFFVASLFCVGPLPCTLL.

Mg(2+) serves as cofactor. Widely expressed, with highest levels in heart and skeletal muscle. As to expression, expressed in skeletal muscle (at protein level). In terms of tissue distribution, expressed in skeletal muscle but a lower levels than isoform 1 (at protein level).

Its subcellular location is the endoplasmic reticulum membrane. It is found in the golgi apparatus membrane. The protein localises to the nucleus envelope. It localises to the cell membrane. The protein resides in the sarcolemma. It carries out the reaction a sphingomyelin + H2O = phosphocholine + an N-acylsphing-4-enine + H(+). Its activity is regulated as follows. Activated by phosphatidylserine and tumor necrosis factor (TNF). Inhibited by scyphostatin. Catalyzes the hydrolysis of membrane sphingomyelin to form phosphorylcholine and ceramide. It has a relevant role in the homeostasis of membrane sphingolipids, thereby influencing membrane integrity, and endoplasmic reticulum organization and function. May sensitize cells to DNA damage-induced apoptosis. In skeletal muscle, mediates TNF-stimulated oxidant production. The polypeptide is Sphingomyelin phosphodiesterase 4 (Homo sapiens (Human)).